Here is a 248-residue protein sequence, read N- to C-terminus: MAGHSQFKNIMHRKGRQDAVRSKMFSKLAREITVAAKAGLPDPTMNARLRLAIQNAKAQSMPKDNIDRAIKKAAGADGENYDEVRYEGYGPGGTAIIVEALTDNRNRTASNVRSSFTKAGGALGETGSVSFSFDHVGEITYKLSVGDGDKVMEAAIEAGADDVESDEDGHYITCAFEALGEVAKALESSLGEAETVKAVWRAQNNVPVDEEKAQSLLKLIDSLEDDDDVQNVYSNFEVSEEVLAKLSA.

The protein belongs to the TACO1 family.

The protein resides in the cytoplasm. The sequence is that of Probable transcriptional regulatory protein RL3983 from Rhizobium johnstonii (strain DSM 114642 / LMG 32736 / 3841) (Rhizobium leguminosarum bv. viciae).